Reading from the N-terminus, the 225-residue chain is Germin-like protein 8-7 (225 aa).

The signal sequence occupies residues 1 to 23; it reads MASPSSFCLLAVLLALVSWQAIA. Residues C33 and C48 are joined by a disulfide bond. Positions 63 to 213 constitute a Cupin type-1 domain; it reads AMLDTPRKTN…AFQVEKGTID (151 aa). The N-linked (GlcNAc...) asparagine glycan is linked to N77. The Mn(2+) site is built by H110, H112, and E117. An N-linked (GlcNAc...) asparagine glycan is attached at N136. H158 is a Mn(2+) binding site.

Belongs to the germin family. In terms of assembly, oligomer (believed to be a pentamer but probably hexamer).

The protein resides in the secreted. It localises to the extracellular space. The protein localises to the apoplast. Its function is as follows. Plays a role in broad-spectrum disease resistance. Probably has no oxalate oxidase activity even if the active site is conserved. The polypeptide is Germin-like protein 8-7 (GER6) (Oryza sativa subsp. japonica (Rice)).